Reading from the N-terminus, the 346-residue chain is Methylthioribose-1-phosphate isomerase (346 aa).

Substrate contacts are provided by residues 46 to 48, Arg-89, and Gln-196; that span reads RGA. Catalysis depends on Asp-237, which acts as the Proton donor. Position 247-248 (247-248) interacts with substrate; the sequence is NK.

This sequence belongs to the eIF-2B alpha/beta/delta subunits family. MtnA subfamily.

The enzyme catalyses 5-(methylsulfanyl)-alpha-D-ribose 1-phosphate = 5-(methylsulfanyl)-D-ribulose 1-phosphate. It participates in amino-acid biosynthesis; L-methionine biosynthesis via salvage pathway; L-methionine from S-methyl-5-thio-alpha-D-ribose 1-phosphate: step 1/6. Catalyzes the interconversion of methylthioribose-1-phosphate (MTR-1-P) into methylthioribulose-1-phosphate (MTRu-1-P). This Citrifermentans bemidjiense (strain ATCC BAA-1014 / DSM 16622 / JCM 12645 / Bem) (Geobacter bemidjiensis) protein is Methylthioribose-1-phosphate isomerase.